The primary structure comprises 141 residues: Nucleoside diphosphate kinase (141 aa).

Lysine 11, phenylalanine 59, arginine 87, threonine 93, arginine 104, and asparagine 114 together coordinate ATP. Histidine 117 (pros-phosphohistidine intermediate) is an active-site residue.

It belongs to the NDK family. In terms of assembly, homotetramer. It depends on Mg(2+) as a cofactor.

It localises to the cytoplasm. It carries out the reaction a 2'-deoxyribonucleoside 5'-diphosphate + ATP = a 2'-deoxyribonucleoside 5'-triphosphate + ADP. The catalysed reaction is a ribonucleoside 5'-diphosphate + ATP = a ribonucleoside 5'-triphosphate + ADP. Functionally, major role in the synthesis of nucleoside triphosphates other than ATP. The ATP gamma phosphate is transferred to the NDP beta phosphate via a ping-pong mechanism, using a phosphorylated active-site intermediate. The chain is Nucleoside diphosphate kinase from Paracidovorax citrulli (strain AAC00-1) (Acidovorax citrulli).